The chain runs to 113 residues: MNTVRVTFLLVFVLAVSLGQADEDGNRMEKRQKKTEAENLLLPKLEELDAKLWEEDSVESRNSRQKRCNGKDVPCDPDPAKNRRCCSGLECLKPYLHGIWYQDYYCYVEKSGR.

Positions 1–21 are cleaved as a signal peptide; it reads MNTVRVTFLLVFVLAVSLGQA. A propeptide spanning residues 22–67 is cleaved from the precursor; that stretch reads DEDGNRMEKRQKKTEAENLLLPKLEELDAKLWEEDSVESRNSRQKR. 3 cysteine pairs are disulfide-bonded: cysteine 68/cysteine 86, cysteine 75/cysteine 91, and cysteine 85/cysteine 106.

It belongs to the neurotoxin 14 (magi-1) family. 02 (HWTX-XVIc) subfamily. As to expression, expressed by the venom gland.

It is found in the secreted. Functionally, probable ion channel inhibitor. This Cyriopagopus schmidti (Chinese bird spider) protein is U10-theraphotoxin-Hs2a.